A 231-amino-acid chain; its full sequence is Ribose-5-phosphate isomerase A (231 aa).

Substrate-binding positions include 23–26 (SGST), 80–83 (DGAD), and 93–96 (KGGG). Residue E102 is the Proton acceptor of the active site. K120 lines the substrate pocket.

This sequence belongs to the ribose 5-phosphate isomerase family. In terms of assembly, homodimer.

The enzyme catalyses aldehydo-D-ribose 5-phosphate = D-ribulose 5-phosphate. Its pathway is carbohydrate degradation; pentose phosphate pathway; D-ribose 5-phosphate from D-ribulose 5-phosphate (non-oxidative stage): step 1/1. In terms of biological role, catalyzes the reversible conversion of ribose-5-phosphate to ribulose 5-phosphate. The sequence is that of Ribose-5-phosphate isomerase A from Prochlorococcus marinus subsp. pastoris (strain CCMP1986 / NIES-2087 / MED4).